The sequence spans 162 residues: Phospholipase A2 (162 aa).

A signal peptide spans 1–22 (MKVLQMFFCVILLCVTSVLVEA). Positions 23–35 (KSTTKGDETASKR) are excised as a propeptide. 6 disulfides stabilise this stretch: Cys-60–Cys-155, Cys-62–Cys-78, Cys-77–Cys-134, Cys-84–Cys-127, Cys-94–Cys-120, and Cys-113–Cys-125. Ca(2+)-binding residues include Tyr-61, Gly-63, and Gly-65. The active site involves His-81. Position 82 (Asp-82) interacts with Ca(2+). The active site involves Asp-128.

It belongs to the phospholipase A2 family. Group I subfamily. D49 sub-subfamily. The cofactor is Ca(2+). As to expression, expressed both outside and in acontia, a specialised envenomation structure laden with batteries of venom-containing nematocysts found only in the superfamily Metridioidea.

The protein resides in the secreted. Its subcellular location is the nematocyst. The enzyme catalyses a 1,2-diacyl-sn-glycero-3-phosphocholine + H2O = a 1-acyl-sn-glycero-3-phosphocholine + a fatty acid + H(+). Functionally, PLA2 catalyzes the calcium-dependent hydrolysis of the 2-acyl groups in 3-sn-phosphoglycerides. This chain is Phospholipase A2, found in Calliactis polypus (Hermit crab anemone).